The following is a 608-amino-acid chain: Protein Spindly (608 aa).

Met1 is modified (N-acetylmethionine). A coiled-coil region spans residues Met1 to Arg445. Residues Pro465 to His487 are disordered. 3 positions are modified to phosphoserine: Ser516, Ser518, and Ser558.

The protein belongs to the Spindly family. Interacts with KNTC1 and ZW10. These interactions appear weak and may be transient or indirect. Interacts with dynein intermediate chain and dynactin (DCTN1). Interacts with the catalytically active form of USP45. Monoubiquitinated with'Lys-48' linkage. Deubiquitinated by USP45.

Its subcellular location is the cytoplasm. The protein resides in the cytoskeleton. It is found in the microtubule organizing center. It localises to the centrosome. The protein localises to the chromosome. Its subcellular location is the centromere. The protein resides in the kinetochore. It is found in the nucleus. It localises to the spindle pole. Functionally, required for the localization of dynein and dynactin to the mitotic kintochore. Dynein is believed to control the initial lateral interaction between the kinetochore and spindle microtubules and to facilitate the subsequent formation of end-on kinetochore-microtubule attachments mediated by the NDC80 complex. Also required for correct spindle orientation. Does not appear to be required for the removal of spindle assembly checkpoint (SAC) proteins from the kinetochore upon bipolar spindle attachment. Acts as an adapter protein linking the dynein motor complex to various cargos and converts dynein from a non-processive to a highly processive motor in the presence of dynactin. Facilitates the interaction between dynein and dynactin and activates dynein processivity (the ability to move along a microtubule for a long distance without falling off the track). Plays a role in cell migration. This chain is Protein Spindly (Spdl1), found in Mus musculus (Mouse).